We begin with the raw amino-acid sequence, 554 residues long: Arginine--tRNA ligase (554 aa).

A 'HIGH' region motif is present at residues 129–139; it reads ANPTGPLHIGH.

This sequence belongs to the class-I aminoacyl-tRNA synthetase family. As to quaternary structure, monomer.

The protein localises to the cytoplasm. It carries out the reaction tRNA(Arg) + L-arginine + ATP = L-arginyl-tRNA(Arg) + AMP + diphosphate. This chain is Arginine--tRNA ligase, found in Geobacter sp. (strain M21).